A 343-amino-acid chain; its full sequence is Probable dual-specificity RNA methyltransferase RlmN (343 aa).

Glu91 (proton acceptor) is an active-site residue. The region spanning 97–327 is the Radical SAM core domain; the sequence is YKHGNSICVS…TTIRREMGSD (231 aa). Cys104 and Cys332 form a disulfide bridge. The [4Fe-4S] cluster site is built by Cys111, Cys115, and Cys118. S-adenosyl-L-methionine contacts are provided by residues 158–159, Ser190, 213–215, and Asn289; these read GE and SLH. Residue Cys332 is the S-methylcysteine intermediate of the active site.

This sequence belongs to the radical SAM superfamily. RlmN family. [4Fe-4S] cluster serves as cofactor.

The protein localises to the cytoplasm. It catalyses the reaction adenosine(2503) in 23S rRNA + 2 reduced [2Fe-2S]-[ferredoxin] + 2 S-adenosyl-L-methionine = 2-methyladenosine(2503) in 23S rRNA + 5'-deoxyadenosine + L-methionine + 2 oxidized [2Fe-2S]-[ferredoxin] + S-adenosyl-L-homocysteine. The catalysed reaction is adenosine(37) in tRNA + 2 reduced [2Fe-2S]-[ferredoxin] + 2 S-adenosyl-L-methionine = 2-methyladenosine(37) in tRNA + 5'-deoxyadenosine + L-methionine + 2 oxidized [2Fe-2S]-[ferredoxin] + S-adenosyl-L-homocysteine. Its function is as follows. Specifically methylates position 2 of adenine 2503 in 23S rRNA and position 2 of adenine 37 in tRNAs. The polypeptide is Probable dual-specificity RNA methyltransferase RlmN (Clostridium novyi (strain NT)).